A 142-amino-acid polypeptide reads, in one-letter code: Small heat shock protein IbpB (142 aa).

Positions 26–137 (AGESQSFPPY…AAQRIAISER (112 aa)) constitute a sHSP domain.

Belongs to the small heat shock protein (HSP20) family. Homodimer. Forms homomultimers of about 100-150 subunits at optimal growth temperatures. Conformation changes to oligomers at high temperatures or high ionic concentrations. The decrease in size of the multimers is accompanied by an increase in chaperone activity.

Its subcellular location is the cytoplasm. Functionally, associates with aggregated proteins, together with IbpA, to stabilize and protect them from irreversible denaturation and extensive proteolysis during heat shock and oxidative stress. Aggregated proteins bound to the IbpAB complex are more efficiently refolded and reactivated by the ATP-dependent chaperone systems ClpB and DnaK/DnaJ/GrpE. Its activity is ATP-independent. This chain is Small heat shock protein IbpB, found in Escherichia coli O7:K1 (strain IAI39 / ExPEC).